Consider the following 84-residue polypeptide: Succinate dehydrogenase membrane anchor subunit (84 aa).

The Mitochondrial matrix segment spans residues 1-3 (MIT). The helical transmembrane segment at 4 to 24 (FQWLIVRVVALFISLTILIDI) threads the bilayer. At 25–31 (EMFVVML) the chain is on the mitochondrial intermembrane side. The helical transmembrane segment at 32-52 (SFLIIHISIGLKAIIHDYIHF) threads the bilayer. Histidine 37 is a binding site for heme. Tyrosine 49 provides a ligand contact to a ubiquinone. Residues 53-58 (QKIKLM) lie on the Mitochondrial matrix side of the membrane. Residues 59-81 (LLILLRVSAIEISRSFRTFYIII) traverse the membrane as a helical segment. Topologically, residues 82–84 (KNT) are mitochondrial intermembrane.

Part of an enzyme complex containing four subunits: a flavoprotein, an iron-sulfur protein, plus two membrane-anchoring proteins. Heme serves as cofactor.

It localises to the mitochondrion inner membrane. The protein operates within carbohydrate metabolism; tricarboxylic acid cycle. Membrane-anchoring subunit of succinate dehydrogenase (SDH). The chain is Succinate dehydrogenase membrane anchor subunit (SDH4) from Chondrus crispus (Carrageen Irish moss).